The following is a 232-amino-acid chain: Ribonuclease 3 (232 aa).

The RNase III domain occupies 5-134 (QTVLKNHFAI…FLGALLLDKD (130 aa)). Mg(2+) is bound at residue E47. D51 is an active-site residue. Positions 120 and 123 each coordinate Mg(2+). Residue E123 is part of the active site. Residues 160–229 (DYKTHLQELL…AKNAVEKGLD (70 aa)) form the DRBM domain.

This sequence belongs to the ribonuclease III family. In terms of assembly, homodimer. Mg(2+) serves as cofactor.

Its subcellular location is the cytoplasm. The catalysed reaction is Endonucleolytic cleavage to 5'-phosphomonoester.. Digests double-stranded RNA. Involved in the processing of primary rRNA transcript to yield the immediate precursors to the large and small rRNAs (23S and 16S). Processes some mRNAs, and tRNAs when they are encoded in the rRNA operon. Processes pre-crRNA and tracrRNA of type II CRISPR loci if present in the organism. This chain is Ribonuclease 3, found in Streptococcus pneumoniae (strain CGSP14).